The sequence spans 220 residues: 7-carboxy-7-deazaguanine synthase (220 aa).

Substrate-binding positions include isoleucine 16–glycine 18 and arginine 31. Positions phenylalanine 22–proline 215 constitute a Radical SAM core domain. Cysteine 35, cysteine 39, and cysteine 42 together coordinate [4Fe-4S] cluster. Threonine 44 is a binding site for Mg(2+). Threonine 74 serves as a coordination point for substrate. Glycine 76 is an S-adenosyl-L-methionine binding site.

It belongs to the radical SAM superfamily. 7-carboxy-7-deazaguanine synthase family. Homodimer. It depends on [4Fe-4S] cluster as a cofactor. S-adenosyl-L-methionine is required as a cofactor. The cofactor is Mg(2+).

The catalysed reaction is 6-carboxy-5,6,7,8-tetrahydropterin + H(+) = 7-carboxy-7-deazaguanine + NH4(+). Its pathway is purine metabolism; 7-cyano-7-deazaguanine biosynthesis. Its function is as follows. Catalyzes the complex heterocyclic radical-mediated conversion of 6-carboxy-5,6,7,8-tetrahydropterin (CPH4) to 7-carboxy-7-deazaguanine (CDG), a step common to the biosynthetic pathways of all 7-deazapurine-containing compounds. The sequence is that of 7-carboxy-7-deazaguanine synthase from Chlorobaculum tepidum (strain ATCC 49652 / DSM 12025 / NBRC 103806 / TLS) (Chlorobium tepidum).